The sequence spans 347 residues: MKELVEEMPDEGYGCTVANRFGQLLGDESDPFDILYAAGTEKKQKKKKEEPKKTSTTTKSVKKESQRDRKTILPAGGGGQVRPGHEVVEEPIQRRVTFDRKFNDAEKPPLSFSVERPVDVLDRPARGRGTGRGKGARGPGFPRSNDGFDQRGKREFERHSGSDRSSVRSEEKRSGSGSRNWGSVRDHMSVIEVASPSEEVTENEETQEAVETDGENRPSETEEVIEVAMEMTLDEWKALQEQSRPKVELNIRKTESSVPSKAVVIHKSKLLQKQDGMDEDVVFRRPANDITCQLEFNFGSLDRPTRGGRGGRGGRGRGGPSMPTLRSPQKFDSAPNPDDPEDFPALA.

Disordered regions lie at residues 39–221 (GTEK…PSET) and 298–347 (FGSL…PALA). Basic and acidic residues-rich tracts occupy residues 61 to 71 (VKKESQRDRKT), 83 to 107 (PGHE…DAEK), 116 to 125 (RPVDVLDRPA), and 146 to 174 (DGFD…EKRS). Over residues 199-213 (EVTENEETQEAVETD) the composition is skewed to acidic residues. Residues 307–319 (GGRGGRGGRGRGG) show a composition bias toward gly residues. A compositionally biased stretch (acidic residues) spans 338-347 (DDPEDFPALA).

Belongs to the SERBP1-HABP4 family. In terms of assembly, associates with ribosomes; promoting ribosome stabilization. Interacts with eef2/eEF2; promoting ribosome stabilization.

It is found in the nucleus. It localises to the cytoplasm. Its subcellular location is the stress granule. The protein localises to the nucleolus. The protein resides in the nucleus speckle. It is found in the cajal body. In terms of biological role, ribosome-binding protein that promotes ribosome hibernation, a process during which ribosomes are stabilized in an inactive state and preserved from proteasomal degradation. Acts via its association with eef2/eEF2 factor at the A-site of the ribosome, promoting ribosome stabilization in an inactive state compatible with storage. Plays a key role in ribosome hibernation in the mature egg by promoting ribosome stabilization. Ribosomes, which are produced in large quantities during oogenesis, are stored and translationally repressed in the egg and early embryo. The polypeptide is Intracellular hyaluronan-binding protein 4 (Danio rerio (Zebrafish)).